The chain runs to 63 residues: Large ribosomal subunit protein bL28 (63 aa).

The protein belongs to the bacterial ribosomal protein bL28 family.

The sequence is that of Large ribosomal subunit protein bL28 from Sulfurihydrogenibium sp. (strain YO3AOP1).